Reading from the N-terminus, the 275-residue chain is AA9 family lytic polysaccharide monooxygenase AA9-X282 (275 aa).

The N-terminal stretch at methionine 1–alanine 17 is a signal peptide. Histidine 18 serves as a coordination point for Cu(2+). Residue threonine 20 is modified to Phosphothreonine. Residues serine 43 and serine 49 each carry the phosphoserine modification. A Phosphothreonine modification is found at threonine 50. Serine 58 bears the Phosphoserine mark. A disulfide bond links cysteine 66 and cysteine 185. Histidine 96 serves as a coordination point for Cu(2+). A Phosphoserine modification is found at serine 130. Positions 171 and 180 each coordinate O2. Tyrosine 182 lines the Cu(2+) pocket. The interval threonine 236 to proline 265 is X282 extension. Residues glycine 268 to alanine 275 carry the 9res motif motif.

It belongs to the polysaccharide monooxygenase AA9 family. It depends on Cu(2+) as a cofactor.

Its subcellular location is the secreted. The catalysed reaction is [(1-&gt;4)-beta-D-glucosyl]n+m + reduced acceptor + O2 = 4-dehydro-beta-D-glucosyl-[(1-&gt;4)-beta-D-glucosyl]n-1 + [(1-&gt;4)-beta-D-glucosyl]m + acceptor + H2O.. In terms of biological role, lytic polysaccharide monooxygenase (LPMO) that depolymerizes crystalline and amorphous polysaccharides via the oxidation of scissile alpha- or beta-(1-4)-glycosidic bonds, yielding C1 oxidation products. Catalysis by LPMOs requires the reduction of the active-site copper from Cu(II) to Cu(I) by a reducing agent and H(2)O(2) or O(2) as a cosubstrate. Shows only weak binding properties to cellulose, and low cellulolytic oxidative activity which questions the involvement of X282 extension-containing AA9 proteins in the degradation of plant cell wall and opens new avenues as to the divergence of function of some AA9 members. This Trametes coccinea (strain BRFM310) (Pycnoporus coccineus) protein is AA9 family lytic polysaccharide monooxygenase AA9-X282.